The sequence spans 240 residues: Chloroplastic group IIB intron splicing facilitator CRS2-B, chloroplastic (240 aa).

The protein belongs to the PTH family. CRS2 subfamily. As to quaternary structure, part of large ribonucleo-protein complexes that include group IIB introns and either CAF1 or CAF2.

It localises to the plastid. The protein localises to the chloroplast stroma. Its function is as follows. Required for the splicing of group IIB introns in chloroplasts. This is Chloroplastic group IIB intron splicing facilitator CRS2-B, chloroplastic (CRS2B) from Arabidopsis thaliana (Mouse-ear cress).